Here is a 340-residue protein sequence, read N- to C-terminus: Maltose epimerase (340 aa).

Arg-79 serves as a coordination point for substrate. The active-site Proton donor is His-178. Asp-247 serves as a coordination point for substrate. Glu-305 acts as the Proton acceptor in catalysis.

The protein belongs to the aldose epimerase family.

The enzyme catalyses alpha-maltose = beta-maltose. Its pathway is carbohydrate metabolism; hexose metabolism. Its function is as follows. Catalyzes the interconversion of alpha and beta anomers of maltose. The chain is Maltose epimerase from Levilactobacillus brevis (strain ATCC 367 / BCRC 12310 / CIP 105137 / JCM 1170 / LMG 11437 / NCIMB 947 / NCTC 947) (Lactobacillus brevis).